Consider the following 252-residue polypeptide: Imidazole glycerol phosphate synthase subunit HisF (252 aa).

Active-site residues include aspartate 12 and aspartate 131.

The protein belongs to the HisA/HisF family. Heterodimer of HisH and HisF.

It is found in the cytoplasm. The catalysed reaction is 5-[(5-phospho-1-deoxy-D-ribulos-1-ylimino)methylamino]-1-(5-phospho-beta-D-ribosyl)imidazole-4-carboxamide + L-glutamine = D-erythro-1-(imidazol-4-yl)glycerol 3-phosphate + 5-amino-1-(5-phospho-beta-D-ribosyl)imidazole-4-carboxamide + L-glutamate + H(+). Its pathway is amino-acid biosynthesis; L-histidine biosynthesis; L-histidine from 5-phospho-alpha-D-ribose 1-diphosphate: step 5/9. Its function is as follows. IGPS catalyzes the conversion of PRFAR and glutamine to IGP, AICAR and glutamate. The HisF subunit catalyzes the cyclization activity that produces IGP and AICAR from PRFAR using the ammonia provided by the HisH subunit. In Thermus thermophilus (strain ATCC 27634 / DSM 579 / HB8), this protein is Imidazole glycerol phosphate synthase subunit HisF.